The chain runs to 267 residues: Glutamate racemase (267 aa).

Substrate is bound by residues 13-14 (DS) and 45-46 (YG). C77 acts as the Proton donor/acceptor in catalysis. 78–79 (NT) is a binding site for substrate. The active-site Proton donor/acceptor is the C192. Residue 193-194 (TH) participates in substrate binding.

The protein belongs to the aspartate/glutamate racemases family.

The catalysed reaction is L-glutamate = D-glutamate. It participates in cell wall biogenesis; peptidoglycan biosynthesis. Provides the (R)-glutamate required for cell wall biosynthesis. This is Glutamate racemase from Sinorhizobium fredii (strain NBRC 101917 / NGR234).